A 91-amino-acid polypeptide reads, in one-letter code: DNA-directed RNA polymerase subunit omega (91 aa).

This sequence belongs to the RNA polymerase subunit omega family. As to quaternary structure, the RNAP catalytic core consists of 2 alpha, 1 beta, 1 beta' and 1 omega subunit. When a sigma factor is associated with the core the holoenzyme is formed, which can initiate transcription.

The catalysed reaction is RNA(n) + a ribonucleoside 5'-triphosphate = RNA(n+1) + diphosphate. Promotes RNA polymerase assembly. Latches the N- and C-terminal regions of the beta' subunit thereby facilitating its interaction with the beta and alpha subunits. The sequence is that of DNA-directed RNA polymerase subunit omega from Erwinia tasmaniensis (strain DSM 17950 / CFBP 7177 / CIP 109463 / NCPPB 4357 / Et1/99).